A 183-amino-acid chain; its full sequence is Ribosome rescue factor SmrB (183 aa).

Positions 98-173 (LDLHGLTQLQ…GDAALLVLIE (76 aa)) constitute a Smr domain.

The protein belongs to the SmrB family. As to quaternary structure, associates with collided ribosomes, but not with correctly translating polysomes.

In terms of biological role, acts as a ribosome collision sensor. Detects stalled/collided disomes (pairs of ribosomes where the leading ribosome is stalled and a second ribosome has collided with it) and endonucleolytically cleaves mRNA at the 5' boundary of the stalled ribosome. Stalled/collided disomes form a new interface (primarily via the 30S subunits) that binds SmrB. Cleaved mRNA becomes available for tmRNA ligation, leading to ribosomal subunit dissociation and rescue of stalled ribosomes. This is Ribosome rescue factor SmrB from Escherichia coli O7:K1 (strain IAI39 / ExPEC).